The primary structure comprises 293 residues: Probable 2-(5''-triphosphoribosyl)-3'-dephosphocoenzyme-A synthase (293 aa).

It belongs to the CitG/MdcB family.

The catalysed reaction is 3'-dephospho-CoA + ATP = 2'-(5''-triphospho-alpha-D-ribosyl)-3'-dephospho-CoA + adenine. Functionally, involved in the formation of 2-(5''-phosphoribosyl)-3'-dephosphocoenzyme-A, the prosthetic group of the acyl-carrier protein of the malonate decarboxylase. In Pseudomonas aeruginosa (strain UCBPP-PA14), this protein is Probable 2-(5''-triphosphoribosyl)-3'-dephosphocoenzyme-A synthase.